A 270-amino-acid chain; its full sequence is Formamidopyrimidine-DNA glycosylase (270 aa).

Pro2 serves as the catalytic Schiff-base intermediate with DNA. Residue Glu3 is the Proton donor of the active site. Lys58 (proton donor; for beta-elimination activity) is an active-site residue. Residues His91, Arg110, and Arg151 each contribute to the DNA site. The FPG-type zinc-finger motif lies at 236-270; sequence LVYGRDGLPCPNCGRALKHATIGQRASVWCSHCQR. Residue Arg260 is the Proton donor; for delta-elimination activity of the active site.

Belongs to the FPG family. As to quaternary structure, monomer. Zn(2+) is required as a cofactor.

It catalyses the reaction Hydrolysis of DNA containing ring-opened 7-methylguanine residues, releasing 2,6-diamino-4-hydroxy-5-(N-methyl)formamidopyrimidine.. It carries out the reaction 2'-deoxyribonucleotide-(2'-deoxyribose 5'-phosphate)-2'-deoxyribonucleotide-DNA = a 3'-end 2'-deoxyribonucleotide-(2,3-dehydro-2,3-deoxyribose 5'-phosphate)-DNA + a 5'-end 5'-phospho-2'-deoxyribonucleoside-DNA + H(+). Its function is as follows. Involved in base excision repair of DNA damaged by oxidation or by mutagenic agents. Acts as a DNA glycosylase that recognizes and removes damaged bases. Has a preference for oxidized purines, such as 7,8-dihydro-8-oxoguanine (8-oxoG). Has AP (apurinic/apyrimidinic) lyase activity and introduces nicks in the DNA strand. Cleaves the DNA backbone by beta-delta elimination to generate a single-strand break at the site of the removed base with both 3'- and 5'-phosphates. The sequence is that of Formamidopyrimidine-DNA glycosylase from Stenotrophomonas maltophilia (strain K279a).